A 106-amino-acid polypeptide reads, in one-letter code: Small ribosomal subunit protein uS10 (106 aa).

It belongs to the universal ribosomal protein uS10 family. In terms of assembly, part of the 30S ribosomal subunit.

Its function is as follows. Involved in the binding of tRNA to the ribosomes. This is Small ribosomal subunit protein uS10 from Caldicellulosiruptor saccharolyticus (strain ATCC 43494 / DSM 8903 / Tp8T 6331).